The sequence spans 339 residues: Ketol-acid reductoisomerase (NADP(+)) (339 aa).

The region spanning 1–182 (MKVYYDSDAD…GGGRSGVIET (182 aa)) is the KARI N-terminal Rossmann domain. NADP(+)-binding positions include 24 to 27 (YGSQ), Arg-48, Ser-51, Ser-53, and 83 to 86 (DEHQ). His-108 is a catalytic residue. Gly-134 contributes to the NADP(+) binding site. In terms of domain architecture, KARI C-terminal knotted spans 183–328 (TFREEVETDL…ARLRKMMPWI (146 aa)). Mg(2+)-binding residues include Asp-191, Glu-195, Glu-227, and Glu-231. Ser-252 provides a ligand contact to substrate.

This sequence belongs to the ketol-acid reductoisomerase family. Requires Mg(2+) as cofactor.

It catalyses the reaction (2R)-2,3-dihydroxy-3-methylbutanoate + NADP(+) = (2S)-2-acetolactate + NADPH + H(+). It carries out the reaction (2R,3R)-2,3-dihydroxy-3-methylpentanoate + NADP(+) = (S)-2-ethyl-2-hydroxy-3-oxobutanoate + NADPH + H(+). Its pathway is amino-acid biosynthesis; L-isoleucine biosynthesis; L-isoleucine from 2-oxobutanoate: step 2/4. The protein operates within amino-acid biosynthesis; L-valine biosynthesis; L-valine from pyruvate: step 2/4. Its function is as follows. Involved in the biosynthesis of branched-chain amino acids (BCAA). Catalyzes an alkyl-migration followed by a ketol-acid reduction of (S)-2-acetolactate (S2AL) to yield (R)-2,3-dihydroxy-isovalerate. In the isomerase reaction, S2AL is rearranged via a Mg-dependent methyl migration to produce 3-hydroxy-3-methyl-2-ketobutyrate (HMKB). In the reductase reaction, this 2-ketoacid undergoes a metal-dependent reduction by NADPH to yield (R)-2,3-dihydroxy-isovalerate. This is Ketol-acid reductoisomerase (NADP(+)) from Zymomonas mobilis subsp. mobilis (strain ATCC 31821 / ZM4 / CP4).